We begin with the raw amino-acid sequence, 503 residues long: 12-dehydrotetracycline 5-monooxygenase/anhydrotetracycline 6-monooxygenase (503 aa).

FAD contacts are provided by residues threonine 13, 32 to 33 (ER), leucine 44, glutamine 99, valine 123, threonine 160, aspartate 288, and 301 to 302 (LN).

This sequence belongs to the PheA/TfdB FAD monooxygenase family. Monomer. FAD is required as a cofactor.

It carries out the reaction 5a,11a-dehydrotetracycline + NADPH + O2 + H(+) = 5a,11a-dehydrooxytetracycline + NADP(+) + H2O. It catalyses the reaction anhydrotetracycline + NADPH + O2 + H(+) = 5a,11a-dehydrotetracycline + NADP(+) + H2O. The protein operates within antibiotic biosynthesis; oxytetracycline biosynthesis. Involved in the biosynthesis of the antibiotics oxytetracycline and tetracycline. OxyS starts by catalyzing the stereospecific hydroxylation of anhydrotetracycline at C(6) position to yield 5a,11a-dehydrotetracycline (12-dehydrotetracycline). If the released product is captured by OxyR, it is reduced to tetracycline. However, if the released product is recaptured by OxyS, it performs an additional hydroxylation at C(5), producing 5a,11a-dehydrooxytetracycline, which, following the action of OxyR becomes oxytetracycline. This chain is 12-dehydrotetracycline 5-monooxygenase/anhydrotetracycline 6-monooxygenase, found in Streptomyces rimosus subsp. rimosus (strain ATCC 10970 / DSM 40260 / JCM 4667 / NRRL 2234).